We begin with the raw amino-acid sequence, 234 residues long: Orotidine 5'-phosphate decarboxylase (234 aa).

Residues Asp-17, Lys-38, 65–74 (DLKLHDIPNT), Thr-122, Arg-184, Gln-193, Gly-213, and Arg-214 each bind substrate. Catalysis depends on Lys-67, which acts as the Proton donor.

The protein belongs to the OMP decarboxylase family. Type 1 subfamily. As to quaternary structure, homodimer.

The enzyme catalyses orotidine 5'-phosphate + H(+) = UMP + CO2. It participates in pyrimidine metabolism; UMP biosynthesis via de novo pathway; UMP from orotate: step 2/2. Functionally, catalyzes the decarboxylation of orotidine 5'-monophosphate (OMP) to uridine 5'-monophosphate (UMP). The chain is Orotidine 5'-phosphate decarboxylase from Thermosynechococcus vestitus (strain NIES-2133 / IAM M-273 / BP-1).